The primary structure comprises 152 residues: Acidic phospholipase A2 1 (152 aa).

Positions 1–19 are cleaved as a signal peptide; sequence MNPAYFLVLAAVCVSLLGA. A propeptide spanning residues 20-27 is cleaved from the precursor; it reads ANIPPQPL. Intrachain disulfides connect Cys38–Cys104, Cys54–Cys151, Cys56–Cys72, Cys71–Cys132, Cys78–Cys125, Cys88–Cys118, and Cys111–Cys123. 3 residues coordinate Ca(2+): Tyr55, Gly57, and Gly59. His75 is a catalytic residue. Asp76 provides a ligand contact to Ca(2+). The active site involves Asp126.

Belongs to the phospholipase A2 family. Group I subfamily. D49 sub-subfamily. Requires Ca(2+) as cofactor. As to expression, expressed by the venom gland.

It localises to the secreted. The catalysed reaction is a 1,2-diacyl-sn-glycero-3-phosphocholine + H2O = a 1-acyl-sn-glycero-3-phosphocholine + a fatty acid + H(+). In terms of biological role, PLA2 catalyzes the calcium-dependent hydrolysis of the 2-acyl groups in 3-sn-phosphoglycerides. In Bungarus candidus (Malayan krait), this protein is Acidic phospholipase A2 1.